Here is a 1096-residue protein sequence, read N- to C-terminus: DNA-directed RNA polymerase subunit beta (1096 aa).

The disordered stretch occupies residues 1070-1096 (LMQDVNPRRSTPSRPTYESLGSDYQED).

Belongs to the RNA polymerase beta chain family. In cyanobacteria the RNAP catalytic core is composed of 2 alpha, 1 beta, 1 beta', 1 gamma and 1 omega subunit. When a sigma factor is associated with the core the holoenzyme is formed, which can initiate transcription.

It catalyses the reaction RNA(n) + a ribonucleoside 5'-triphosphate = RNA(n+1) + diphosphate. DNA-dependent RNA polymerase catalyzes the transcription of DNA into RNA using the four ribonucleoside triphosphates as substrates. The polypeptide is DNA-directed RNA polymerase subunit beta (Prochlorococcus marinus (strain MIT 9211)).